Reading from the N-terminus, the 118-residue chain is Basic phospholipase A2 PA-15 (118 aa).

Disulfide bonds link Cys-11–Cys-71, Cys-27–Cys-117, Cys-29–Cys-45, Cys-44–Cys-98, Cys-51–Cys-91, Cys-60–Cys-84, and Cys-78–Cys-89. 3 residues coordinate Ca(2+): Tyr-28, Gly-30, and Gly-32. Residue His-48 is part of the active site. Residue Asp-49 coordinates Ca(2+). The active site involves Asp-92.

It belongs to the phospholipase A2 family. Group I subfamily. D49 sub-subfamily. The cofactor is Ca(2+). In terms of tissue distribution, expressed by the venom gland.

It localises to the secreted. It carries out the reaction a 1,2-diacyl-sn-glycero-3-phosphocholine + H2O = a 1-acyl-sn-glycero-3-phosphocholine + a fatty acid + H(+). Functionally, PLA2 catalyzes the calcium-dependent hydrolysis of the 2-acyl groups in 3-sn-phosphoglycerides. This chain is Basic phospholipase A2 PA-15, found in Pseudechis australis (Mulga snake).